The chain runs to 341 residues: L-threonine 3-dehydrogenase (341 aa).

Cys-38 serves as a coordination point for Zn(2+). Active-site charge relay system residues include Thr-40 and His-43. Zn(2+) contacts are provided by His-63, Glu-64, Cys-93, Cys-96, Cys-99, and Cys-107. Residues Ile-175, Asp-195, Arg-200, 262–264, and 286–287 contribute to the NAD(+) site; these read LGI and IY.

The protein belongs to the zinc-containing alcohol dehydrogenase family. As to quaternary structure, homotetramer. Requires Zn(2+) as cofactor.

The protein resides in the cytoplasm. It carries out the reaction L-threonine + NAD(+) = (2S)-2-amino-3-oxobutanoate + NADH + H(+). Its pathway is amino-acid degradation; L-threonine degradation via oxydo-reductase pathway; glycine from L-threonine: step 1/2. Its function is as follows. Catalyzes the NAD(+)-dependent oxidation of L-threonine to 2-amino-3-ketobutyrate. This is L-threonine 3-dehydrogenase from Shewanella putrefaciens (strain CN-32 / ATCC BAA-453).